The sequence spans 759 residues: Cullin-4A (759 aa).

The segment at 1–40 (MADEGPRKGSVSALMGRTNGLTKPAALAGGPAKPGGTGGS) is disordered. Lysine 8 participates in a covalent cross-link: Glycyl lysine isopeptide (Lys-Gly) (interchain with G-Cter in SUMO2). A Phosphoserine modification is found at serine 10. The span at 20–31 (GLTKPAALAGGP) shows a compositional bias: low complexity. A Glycyl lysine isopeptide (Lys-Gly) (interchain with G-Cter in ubiquitin) cross-link involves residue lysine 33. Residues 691 to 750 (DRQYQIDAAIVRIMKMRKTLGHNLLVSELYNQLKFPVKPGDLKKRIESLIDRDYMERDKD) enclose the Cullin neddylation domain. Lysine 705 is covalently cross-linked (Glycyl lysine isopeptide (Lys-Gly) (interchain with G-Cter in NEDD8)).

The protein belongs to the cullin family. As to quaternary structure, can self-associate. Component of multiple DCX (DDB1-CUL4-X-box) E3 ubiquitin-protein ligase complexes that seem to consist of DDB1, CUL4A or CUL4B, RBX1 and a variable substrate recognition component which seems to belong to a protein family described as DCAF (Ddb1- and Cul4-associated factor) or CDW (CUL4-DDB1-associated WD40-repeat) proteins. Component of the CSA complex (DCX(ERCC8) complex) containing ERCC8, RBX1, DDB1 and CUL4A; the CSA complex interacts with RNA polymerase II; upon UV irradiation it interacts with the COP9 signalosome and preferentially with the hyperphosphorylated form of RNA polymerase II. Component of the DCX(DET1-COP1) complex with the substrate recognition component DET1 and COP1. Component of the DCX(DDB2) complex with the substrate recognition component DDB2. Component of the DCX(DTL) complex with the putative substrate recognition component DTL. Component of DCX complexes part of the DesCEND (destruction via C-end degrons) pathway, which contain either TRPC4AP or DCAF12 as substrate-recognition component. Component of the DCX(AMBRA1) complex with the substrate recognition component AMBRA1. Interacts with DDB1, RBX1, RNF7, CDT1, TIP120A/CAND1, SKP2, CDKN1B, MDM2, TP53 and HOXA9. Interacts with DDB2; the interactions with DDB2 and CAND1 are mutually exclusive. Interacts with DCAF1, DTL, DDA1, DCAF6, DCAF4, DCAF16, DCAF17, DET1, WDTC1, DCAF5, DCAF11, WDR24A, COP1, PAFAH1B1, ERCC8, GRWD1, FBXW5, RBBP7, GNB2, WSB1, WSB2, NUP43, PWP1, FBXW8, ATG16L1, KATNB1, RBBP4, RBBP5, LRWD1 and DCAF8. May interact with WDR26, WDR51B, SNRNP40, WDR61, WDR76, WDR5. Interacts (when neddylated) with ARIH1; leading to activate the E3 ligase activity of ARIH1. The DDB1-CUL4A complex interacts with CRY1. Interacts (unneddylated form) with DCUN1D1, DCUN1D2, DCUN1D3, DCUN1D4 and DCUN1D5; these interactions promote the cullin neddylation. (Microbial infection) Interacts with murine cytomegalovirus M48. In terms of processing, neddylated; required for activity of cullin-RING-based E3 ubiquitin-protein ligase complexes. Deneddylated via its interaction with the COP9 signalosome (CSN) complex. (Microbial infection) Deneddylated by murine cytomegalovirus M48 leading to a S-phase-like environment that is required for efficient replication of the viral genome. In terms of tissue distribution, expressed in oocytes (at protein level). In the ovary, also expressed in cumulus cells. Expressed in testis, spleen and kidney.

It participates in protein modification; protein ubiquitination. Its function is as follows. Core component of multiple cullin-RING-based E3 ubiquitin-protein ligase complexes which mediate the ubiquitination of target proteins. As a scaffold protein may contribute to catalysis through positioning of the substrate and the ubiquitin-conjugating enzyme. The E3 ubiquitin-protein ligase activity of the complex is dependent on the neddylation of the cullin subunit and is inhibited by the association of the deneddylated cullin subunit with TIP120A/CAND1. The functional specificity of the E3 ubiquitin-protein ligase complex depends on the variable substrate recognition component. DCX(DET1-COP1) directs ubiquitination of JUN. DCX(DDB2) directs ubiquitination of XPC. DCX(DDB2) ubiquitinates histones H3-H4 and is required for efficient histone deposition during replication-coupled (H3.1) and replication-independent (H3.3) nucleosome assembly, probably by facilitating the transfer of H3 from ASF1A/ASF1B to other chaperones involved in histone deposition. DCX(DTL) plays a role in PCNA-dependent polyubiquitination of CDT1 and MDM2-dependent ubiquitination of p53/TP53 in response to radiation-induced DNA damage and during DNA replication. DCX(DTL) directs autoubiquitination of DTL. In association with DDB1 and SKP2 probably is involved in ubiquitination of CDKN1B/p27kip. Is involved in ubiquitination of HOXA9. The DDB1-CUL4A-DTL E3 ligase complex regulates the circadian clock function by mediating the ubiquitination and degradation of CRY1. The DCX(ERCC8) complex (also named CSA complex) plays a role in transcription-coupled repair (TCR). A number of DCX complexes (containing either TRPC4AP or DCAF12 as substrate-recognition component) are part of the DesCEND (destruction via C-end degrons) pathway, which recognizes a C-degron located at the extreme C terminus of target proteins, leading to their ubiquitination and degradation. With CUL4B, contributes to ribosome biogenesis. The DCX(AMBRA1) complex is a master regulator of the transition from G1 to S cell phase by mediating ubiquitination of phosphorylated cyclin-D (CCND1, CCND2 and CCND3). The DCX(AMBRA1) complex also acts as a regulator of Cul5-RING (CRL5) E3 ubiquitin-protein ligase complexes by mediating ubiquitination and degradation of Elongin-C (ELOC) component of CRL5 complexes. This chain is Cullin-4A, found in Mus musculus (Mouse).